The primary structure comprises 155 residues: Small ribosomal subunit protein uS13 (155 aa).

A compositionally biased stretch (basic residues) spans 135–145 (QHTKTTGRRGR). Residues 135–155 (QHTKTTGRRGRTVGVSRTKGA) form a disordered region. Positions 146–155 (TVGVSRTKGA) are enriched in low complexity.

It belongs to the universal ribosomal protein uS13 family. In terms of assembly, component of the small ribosomal subunit.

The protein resides in the cytoplasm. Functionally, component of the small ribosomal subunit. The ribosome is a large ribonucleoprotein complex responsible for the synthesis of proteins in the cell. This is Small ribosomal subunit protein uS13 (RPS18) from Entamoeba histolytica (strain ATCC 30459 / HM-1:IMSS / ABRM).